Here is a 384-residue protein sequence, read N- to C-terminus: Succinyl-diaminopimelate desuccinylase (384 aa).

Zn(2+) is bound at residue H75. D77 is a catalytic residue. D108 lines the Zn(2+) pocket. E142 acts as the Proton acceptor in catalysis. Zn(2+) is bound by residues E143, E171, and H357.

Belongs to the peptidase M20A family. DapE subfamily. As to quaternary structure, homodimer. It depends on Zn(2+) as a cofactor. Co(2+) serves as cofactor.

It catalyses the reaction N-succinyl-(2S,6S)-2,6-diaminopimelate + H2O = (2S,6S)-2,6-diaminopimelate + succinate. Its pathway is amino-acid biosynthesis; L-lysine biosynthesis via DAP pathway; LL-2,6-diaminopimelate from (S)-tetrahydrodipicolinate (succinylase route): step 3/3. Catalyzes the hydrolysis of N-succinyl-L,L-diaminopimelic acid (SDAP), forming succinate and LL-2,6-diaminopimelate (DAP), an intermediate involved in the bacterial biosynthesis of lysine and meso-diaminopimelic acid, an essential component of bacterial cell walls. In Shewanella oneidensis (strain ATCC 700550 / JCM 31522 / CIP 106686 / LMG 19005 / NCIMB 14063 / MR-1), this protein is Succinyl-diaminopimelate desuccinylase.